The following is a 182-amino-acid chain: UPF0200 protein Mboo_1593 (182 aa).

8 to 15 lines the ATP pocket; the sequence is GLPASGKG.

The protein belongs to the UPF0200 family.

This chain is UPF0200 protein Mboo_1593, found in Methanoregula boonei (strain DSM 21154 / JCM 14090 / 6A8).